The primary structure comprises 408 residues: Imidazolonepropionase (408 aa).

The Fe(3+) site is built by His73 and His75. Residues His73 and His75 each coordinate Zn(2+). 4-imidazolone-5-propanoate contacts are provided by Arg82, Tyr145, and His178. Position 145 (Tyr145) interacts with N-formimidoyl-L-glutamate. His243 contributes to the Fe(3+) binding site. His243 lines the Zn(2+) pocket. 4-imidazolone-5-propanoate is bound at residue Gln246. Position 318 (Asp318) interacts with Fe(3+). Asp318 provides a ligand contact to Zn(2+). N-formimidoyl-L-glutamate contacts are provided by Asn320 and Gly322. A 4-imidazolone-5-propanoate-binding site is contributed by Ser323.

The protein belongs to the metallo-dependent hydrolases superfamily. HutI family. Zn(2+) is required as a cofactor. It depends on Fe(3+) as a cofactor.

The protein resides in the cytoplasm. It catalyses the reaction 4-imidazolone-5-propanoate + H2O = N-formimidoyl-L-glutamate. Its pathway is amino-acid degradation; L-histidine degradation into L-glutamate; N-formimidoyl-L-glutamate from L-histidine: step 3/3. In terms of biological role, catalyzes the hydrolytic cleavage of the carbon-nitrogen bond in imidazolone-5-propanoate to yield N-formimidoyl-L-glutamate. It is the third step in the universal histidine degradation pathway. This Shewanella sp. (strain MR-4) protein is Imidazolonepropionase.